The sequence spans 255 residues: 3-dehydroquinate dehydratase (255 aa).

3-dehydroquinate is bound by residues 47-49 (EWR) and R83. H144 acts as the Proton donor/acceptor in catalysis. The active-site Schiff-base intermediate with substrate is K171. Residues R214, S233, and Q237 each coordinate 3-dehydroquinate.

Belongs to the type-I 3-dehydroquinase family. As to quaternary structure, homodimer.

It catalyses the reaction 3-dehydroquinate = 3-dehydroshikimate + H2O. The protein operates within metabolic intermediate biosynthesis; chorismate biosynthesis; chorismate from D-erythrose 4-phosphate and phosphoenolpyruvate: step 3/7. Functionally, involved in the third step of the chorismate pathway, which leads to the biosynthesis of aromatic amino acids. Catalyzes the cis-dehydration of 3-dehydroquinate (DHQ) and introduces the first double bond of the aromatic ring to yield 3-dehydroshikimate. This is 3-dehydroquinate dehydratase from Alkaliphilus oremlandii (strain OhILAs) (Clostridium oremlandii (strain OhILAs)).